The sequence spans 547 residues: Solute carrier family 22 member 25 (547 aa).

The Cytoplasmic portion of the chain corresponds to 1–9 (MAFQDLLDQ). A helical transmembrane segment spans residues 10 to 30 (VGGLGRFQILQMVFLIMFNVI). The Extracellular portion of the chain corresponds to 31-145 (VYHQTQLENF…DLVCESQPLN (115 aa)). Asparagine 56 and asparagine 102 each carry an N-linked (GlcNAc...) asparagine glycan. A helical membrane pass occupies residues 146–166 (SVAKFLFMAGMMVGGNLYGHL). Residues 167-177 (SDRFGRKFVLR) are Cytoplasmic-facing. Residues 178–198 (WSYLQLAIVGTCAAFAPTILV) form a helical membrane-spanning segment. The Extracellular segment spans residues 199–204 (YCSLRF). The chain crosses the membrane as a helical span at residues 205–225 (LAGAATFSIIVNTVLLIVEWI). The Cytoplasmic segment spans residues 226-234 (THQFCAMAL). Residues 235 to 255 (TLTLCAASIGHITLGSLAFVI) form a helical membrane-spanning segment. Over 256–259 (RDQC) the chain is Extracellular. The chain crosses the membrane as a helical span at residues 260–280 (ILQLVMSAPCFVFFLFSRWLA). Residues 281-349 (ESARWLIINN…LLRIPNICKR (69 aa)) are Cytoplasmic-facing. Residues 350–370 (ICFLSFVRFASTIPFWGLTLH) traverse the membrane as a helical segment. The Extracellular portion of the chain corresponds to 371 to 377 (LQHLGNN). The chain crosses the membrane as a helical span at residues 378-398 (VFLLQTLFGAVTLLANCVAPW). Residues 399-406 (ALNHMSRR) lie on the Cytoplasmic side of the membrane. Residues 407 to 427 (LSQMLLMFLLATCLLAIIFVP) form a helical membrane-spanning segment. Topologically, residues 428-434 (QEMQTLR) are extracellular. Residues 435–455 (VVLATLGVGAASLGITCSTAQ) form a helical membrane-spanning segment. Over 456–470 (ENELIPSIIRGRATG) the chain is Cytoplasmic. Residues 471–491 (ITGNFANIGGALASLMMILSI) form a helical membrane-spanning segment. Over 492–494 (YSR) the chain is Extracellular. A helical transmembrane segment spans residues 495–515 (PLPWIIYGVFAILSGLVVLLL). The Cytoplasmic portion of the chain corresponds to 516 to 547 (PETRNQPLLDSIQDVENEGVNSLAAPQRSSVL).

This sequence belongs to the major facilitator (TC 2.A.1) superfamily. Organic cation transporter (TC 2.A.1.19) family. In terms of tissue distribution, expressed exclusively in liver in both embryo and adult.

It localises to the membrane. This is Solute carrier family 22 member 25 from Homo sapiens (Human).